The sequence spans 345 residues: Fe(3+) ions import ATP-binding protein FbpC (345 aa).

Residues 4-236 form the ABC transporter domain; that stretch reads LELHGIGKSY…PVDEPTASFL (233 aa). Position 36–43 (36–43) interacts with ATP; the sequence is GPSGSGKT.

The protein belongs to the ABC transporter superfamily. Fe(3+) ion importer (TC 3.A.1.10) family. As to quaternary structure, the complex is composed of two ATP-binding proteins (FbpC), two transmembrane proteins (FbpB) and a solute-binding protein (FbpA).

It is found in the cell inner membrane. The enzyme catalyses Fe(3+)(out) + ATP + H2O = Fe(3+)(in) + ADP + phosphate + H(+). Part of the ABC transporter complex FbpABC involved in Fe(3+) ions import. Responsible for energy coupling to the transport system. This chain is Fe(3+) ions import ATP-binding protein FbpC, found in Serratia marcescens.